The chain runs to 310 residues: Acetylglutamate kinase (310 aa).

Substrate is bound by residues 79–80 (GG), R101, and N206.

Belongs to the acetylglutamate kinase family. ArgB subfamily.

It is found in the cytoplasm. The catalysed reaction is N-acetyl-L-glutamate + ATP = N-acetyl-L-glutamyl 5-phosphate + ADP. Its pathway is amino-acid biosynthesis; L-arginine biosynthesis; N(2)-acetyl-L-ornithine from L-glutamate: step 2/4. In terms of biological role, catalyzes the ATP-dependent phosphorylation of N-acetyl-L-glutamate. The sequence is that of Acetylglutamate kinase from Rhodospirillum rubrum (strain ATCC 11170 / ATH 1.1.1 / DSM 467 / LMG 4362 / NCIMB 8255 / S1).